A 394-amino-acid polypeptide reads, in one-letter code: L-lactate 2-monooxygenase (394 aa).

The region spanning 19–394 is the FMN hydroxy acid dehydrogenase domain; the sequence is VAPTLPMSYA…LTIDALRPTR (376 aa). Tyrosine 45 serves as a coordination point for a 2-oxocarboxylate. FMN contacts are provided by residues 98-100, serine 129, and glutamine 151; that span reads PIG. Tyrosine 153 lines the a 2-oxocarboxylate pocket. Position 179 (threonine 179) interacts with FMN. Residue arginine 188 participates in a 2-oxocarboxylate binding. Lysine 267 is a binding site for FMN. Residue histidine 291 is the Proton acceptor of the active site. Arginine 294 is a binding site for a 2-oxocarboxylate. FMN is bound by residues 321–325 and arginine 345; that span reads DSGIR.

It belongs to the FMN-dependent alpha-hydroxy acid dehydrogenase family. As to quaternary structure, homotetramer. The cofactor is FMN.

It carries out the reaction (S)-lactate + O2 = acetate + CO2 + H2O. Functionally, catalyzes the oxidative decarboxylation of (S)-lactate (L-lactate) to acetate and carbon dioxide. Its physiological role remains unknown. This is L-lactate 2-monooxygenase from Mycolicibacterium smegmatis (Mycobacterium smegmatis).